Here is a 513-residue protein sequence, read N- to C-terminus: ATP synthase subunit alpha (513 aa).

169-176 is an ATP binding site; sequence GDRQTGKT.

The protein belongs to the ATPase alpha/beta chains family. As to quaternary structure, F-type ATPases have 2 components, CF(1) - the catalytic core - and CF(0) - the membrane proton channel. CF(1) has five subunits: alpha(3), beta(3), gamma(1), delta(1), epsilon(1). CF(0) has three main subunits: a(1), b(2) and c(9-12). The alpha and beta chains form an alternating ring which encloses part of the gamma chain. CF(1) is attached to CF(0) by a central stalk formed by the gamma and epsilon chains, while a peripheral stalk is formed by the delta and b chains.

Its subcellular location is the cell inner membrane. It carries out the reaction ATP + H2O + 4 H(+)(in) = ADP + phosphate + 5 H(+)(out). Produces ATP from ADP in the presence of a proton gradient across the membrane. The alpha chain is a regulatory subunit. In Polynucleobacter necessarius subsp. necessarius (strain STIR1), this protein is ATP synthase subunit alpha.